A 751-amino-acid polypeptide reads, in one-letter code: Ecdysteroid-phosphate phosphatase (751 aa).

The region spanning Cys-16–His-60 is the UBA domain. In terms of domain architecture, SH3 spans Ala-271–Glu-336. 2 disordered regions span residues Gly-367–Ser-394 and Glu-458–Leu-484. The segment covering Arg-466–Leu-479 has biased composition (basic and acidic residues). The phosphatase-like stretch occupies residues Lys-490–Thr-751. Arg-498 is a catalytic residue. The active-site Tele-phosphohistidine intermediate is the His-499. His-681 is an active-site residue.

It is found in the cytoplasm. The protein localises to the cytosol. It localises to the nucleus. The enzyme catalyses ecdysone 22-phosphate + H2O = ecdysone + phosphate. It carries out the reaction 20-hydroxyecdysone 22-phosphate + H2O = 20-hydroxyecdysone + phosphate. The catalysed reaction is 2-deoxyecdysone 22-phosphate + H2O = 2-deoxyecdysone + phosphate. In terms of biological role, steroid phosphatase that dephosphorylates ecdysteroids such as ecdysone 22-phosphate (E22P), 3-epi-ecdysone 22-phosphate (E22P) and 3-epi-ecdysone 2-phosphate (E2P). Likely catalyzes the conversion of inactive phosphorylated ecdysteroids into their active forms. Shows high activity towards ecdysone 22-phosphate (E22P), but is also significantly active against 3-epi-ecdysone 22-phosphate (E22P) and 3-epi-ecdysone 2-phosphate (E2P). Also displays acid phosphatase activity towards 4-nitrophenyl phosphate (pNNP) in vitro. Has no activity towards 3-epi-ecdysone 3-phosphate (E3P). The sequence is that of Ecdysteroid-phosphate phosphatase from Drosophila melanogaster (Fruit fly).